Reading from the N-terminus, the 514-residue chain is UDP-N-acetylmuramyl-tripeptide synthetase (514 aa).

The UDP-N-acetyl-alpha-D-muramoyl-L-alanyl-D-glutamate site is built by Leu-44 and Ser-46. Residue 129–135 (GTNGKTS) coordinates ATP. Residues 171–172 (TT), Ser-198, and Arg-206 each bind UDP-N-acetyl-alpha-D-muramoyl-L-alanyl-D-glutamate. An N6-carboxylysine modification is found at Lys-238.

Belongs to the MurCDEF family. MurE subfamily. Post-translationally, carboxylation is probably crucial for Mg(2+) binding and, consequently, for the gamma-phosphate positioning of ATP.

The protein resides in the cytoplasm. It participates in cell wall biogenesis; peptidoglycan biosynthesis. Catalyzes the addition of an amino acid to the nucleotide precursor UDP-N-acetylmuramoyl-L-alanyl-D-glutamate (UMAG) in the biosynthesis of bacterial cell-wall peptidoglycan. The chain is UDP-N-acetylmuramyl-tripeptide synthetase from Leifsonia xyli subsp. xyli (strain CTCB07).